A 515-amino-acid chain; its full sequence is Cytochrome P450 1A1 (515 aa).

Phenylalanine 225 provides a ligand contact to substrate. Cysteine 459 provides a ligand contact to heme.

This sequence belongs to the cytochrome P450 family. It depends on heme as a cofactor.

It localises to the endoplasmic reticulum membrane. The protein resides in the microsome membrane. It carries out the reaction an organic molecule + reduced [NADPH--hemoprotein reductase] + O2 = an alcohol + oxidized [NADPH--hemoprotein reductase] + H2O + H(+). Functionally, cytochromes P450 are a group of heme-thiolate monooxygenases. They oxidize a variety of structurally unrelated compounds, including steroids, fatty acids, and xenobiotics. This is Cytochrome P450 1A1 (cyp1a1) from Microgadus tomcod (Atlantic tomcod).